The following is a 316-amino-acid chain: L-lactate dehydrogenase (316 aa).

NAD(+) is bound by residues Val-16, Asp-37, Lys-42, Tyr-68, and 82–83 (GA). Gln-85 and Arg-91 together coordinate substrate. NAD(+)-binding positions include Ser-104, 121–123 (AAN), and Ser-146. Substrate is bound at residue 123–126 (NPVD). A substrate-binding site is contributed by 151 to 154 (DSAR). The beta-D-fructose 1,6-bisphosphate site is built by Arg-156 and His-171. Catalysis depends on His-178, which acts as the Proton acceptor. Tyr-222 bears the Phosphotyrosine mark. Residue Thr-231 coordinates substrate.

Belongs to the LDH/MDH superfamily. LDH family. As to quaternary structure, homotetramer.

Its subcellular location is the cytoplasm. The catalysed reaction is (S)-lactate + NAD(+) = pyruvate + NADH + H(+). Its pathway is fermentation; pyruvate fermentation to lactate; (S)-lactate from pyruvate: step 1/1. Its activity is regulated as follows. Allosterically activated by fructose 1,6-bisphosphate (FBP). Functionally, catalyzes the conversion of lactate to pyruvate. The chain is L-lactate dehydrogenase from Staphylococcus epidermidis (strain ATCC 12228 / FDA PCI 1200).